The chain runs to 910 residues: Staphylococcal nuclease domain-containing protein 1 (910 aa).

Residue A2 is modified to N-acetylalanine. 3 TNase-like domains span residues 18 to 166, 193 to 328, and 341 to 496; these read TVQR…MWSE, KPVN…IWRD, and KQFV…LHSK. Position 103 is a phosphothreonine (T103). K193 carries the post-translational modification N6-acetyllysine. Residues T235 and T240 each carry the phosphothreonine modification. 2 short sequence motifs (nuclear localization signal) span residues 321 to 325 and 388 to 392; these read RRLRI and KKLRP. At S426 the chain carries Phosphoserine. A Glycyl lysine isopeptide (Lys-Gly) (interchain with G-Cter in SUMO2) cross-link involves residue K513. The 136-residue stretch at 525-660 folds into the TNase-like 4 domain; the sequence is GRSEAVVEYV…KQRKEKVWAH (136 aa). K641 is modified (N6-acetyllysine). At S645 the chain carries Phosphoserine. The Tudor domain occupies 729-787; it reads APRRGEFCIAKFVDGEWYRARVEKVESPAKVHVFYIDYGNREILPSTRLGTLPPAFSTR. At T779 the chain carries Phosphothreonine. Residues S785 and S909 each carry the phosphoserine modification.

In terms of assembly, forms a ternary complex with STAT6 and POLR2A. Associates with the RNA-induced silencing complex (RISC). Interacts with the RISC components AGO2, FMR1 and TNRC6A. Interacts with GTF2E1 and GTF2E2. Interacts with PIM1. Interacts with STAT5. Interacts with SYT11 (via C2 2 domain); the interaction with SYT11 is direct. In terms of processing, phosphorylated by PIM1 in vitro.

It is found in the cytoplasm. The protein resides in the nucleus. Its subcellular location is the melanosome. The catalysed reaction is Endonucleolytic cleavage to nucleoside 3'-phosphates and 3'-phosphooligonucleotide end-products.. Functionally, endonuclease that mediates miRNA decay of both protein-free and AGO2-loaded miRNAs. As part of its function in miRNA decay, regulates mRNAs involved in G1-to-S phase transition. Functions as a bridging factor between STAT6 and the basal transcription factor. Plays a role in PIM1 regulation of MYB activity. Functions as a transcriptional coactivator for STAT5. This Mus musculus (Mouse) protein is Staphylococcal nuclease domain-containing protein 1 (Snd1).